The following is a 409-amino-acid chain: Argininosuccinate synthase (409 aa).

Residues 8 to 16 (AYSGGLDTS) and alanine 34 contribute to the ATP site. Residue tyrosine 85 participates in L-citrulline binding. Glycine 115 contributes to the ATP binding site. L-aspartate contacts are provided by threonine 117, asparagine 121, and aspartate 122. Asparagine 121 serves as a coordination point for L-citrulline. The L-citrulline site is built by arginine 125, serine 178, serine 187, glutamate 268, and tyrosine 280.

Belongs to the argininosuccinate synthase family. Type 1 subfamily. In terms of assembly, homotetramer.

The protein localises to the cytoplasm. It carries out the reaction L-citrulline + L-aspartate + ATP = 2-(N(omega)-L-arginino)succinate + AMP + diphosphate + H(+). Its pathway is amino-acid biosynthesis; L-arginine biosynthesis; L-arginine from L-ornithine and carbamoyl phosphate: step 2/3. The protein is Argininosuccinate synthase of Thermotoga maritima (strain ATCC 43589 / DSM 3109 / JCM 10099 / NBRC 100826 / MSB8).